The sequence spans 485 residues: Serine/threonine-protein kinase dst4 (485 aa).

Residues 21–278 (FRVLEVIGQG…AVDLLNHPFI (258 aa)) enclose the Protein kinase domain. Residues 27–35 (IGQGSFGVV) and lysine 50 contribute to the ATP site. Aspartate 142 serves as the catalytic Proton acceptor. Disordered stretches follow at residues 304–343 (RRKK…SAGL), 360–424 (VMRE…GSVV), and 436–485 (SMKL…NQDD). A compositionally biased stretch (acidic residues) spans 310-324 (EEEAEEAEEGDDYDD). Positions 370–393 (SNNGGTFIYNNNNNNSSKTSSSGT) are enriched in low complexity. Acidic residues-rich tracts occupy residues 406–417 (DDDDDDDIEEGG) and 450–468 (SSDE…EEGG). A compositionally biased stretch (polar residues) spans 474–485 (VVYTKSPVNQDD).

It belongs to the protein kinase superfamily. STE Ser/Thr protein kinase family. STE20 subfamily. Requires Mg(2+) as cofactor.

The catalysed reaction is L-seryl-[protein] + ATP = O-phospho-L-seryl-[protein] + ADP + H(+). It catalyses the reaction L-threonyl-[protein] + ATP = O-phospho-L-threonyl-[protein] + ADP + H(+). The sequence is that of Serine/threonine-protein kinase dst4 from Dictyostelium discoideum (Social amoeba).